Consider the following 29-residue polypeptide: Cyclotide cter-K (29 aa).

A cross-link (cyclopeptide (His-Asn)) is located at residues 1 to 29 (HEPCGESCVFIPCITTVVGCSCKNKVCYN). Disulfide bonds link C4–C20, C8–C22, and C13–C27.

Contains 3 disulfide bonds. In terms of processing, this is a cyclic peptide.

In terms of biological role, probably participates in a plant defense mechanism. This chain is Cyclotide cter-K, found in Clitoria ternatea (Butterfly pea).